The chain runs to 652 residues: DNA ligase (652 aa).

NAD(+) contacts are provided by residues 29–33, 78–79, and glutamate 107; these read DSEYD and SL. Lysine 109 acts as the N6-AMP-lysine intermediate in catalysis. 4 residues coordinate NAD(+): arginine 130, glutamate 164, lysine 278, and lysine 302. Zn(2+)-binding residues include cysteine 395, cysteine 398, cysteine 413, and cysteine 418. Residues 577-652 enclose the BRCT domain; it reads VADAALSGLT…VRDEAWLESL (76 aa).

This sequence belongs to the NAD-dependent DNA ligase family. LigA subfamily. It depends on Mg(2+) as a cofactor. Mn(2+) is required as a cofactor.

The enzyme catalyses NAD(+) + (deoxyribonucleotide)n-3'-hydroxyl + 5'-phospho-(deoxyribonucleotide)m = (deoxyribonucleotide)n+m + AMP + beta-nicotinamide D-nucleotide.. Its function is as follows. DNA ligase that catalyzes the formation of phosphodiester linkages between 5'-phosphoryl and 3'-hydroxyl groups in double-stranded DNA using NAD as a coenzyme and as the energy source for the reaction. It is essential for DNA replication and repair of damaged DNA. The protein is DNA ligase of Streptococcus pneumoniae serotype 2 (strain D39 / NCTC 7466).